We begin with the raw amino-acid sequence, 239 residues long: Skn-1 dependent zygotic transcript 1 protein (239 aa).

Expressed in mesendodermal precursor cells of embryos.

In terms of biological role, may have a role in mesendoderm development during embryogenesis. The polypeptide is Skn-1 dependent zygotic transcript 1 protein (sdz-1) (Caenorhabditis elegans).